Here is a 142-residue protein sequence, read N- to C-terminus: Nucleoside diphosphate kinase (142 aa).

ATP contacts are provided by Lys11, Phe59, Arg87, Thr93, Arg104, and Asn114. His117 (pros-phosphohistidine intermediate) is an active-site residue.

Belongs to the NDK family. Homotetramer. It depends on Mg(2+) as a cofactor.

The protein resides in the cytoplasm. It carries out the reaction a 2'-deoxyribonucleoside 5'-diphosphate + ATP = a 2'-deoxyribonucleoside 5'-triphosphate + ADP. The enzyme catalyses a ribonucleoside 5'-diphosphate + ATP = a ribonucleoside 5'-triphosphate + ADP. Functionally, major role in the synthesis of nucleoside triphosphates other than ATP. The ATP gamma phosphate is transferred to the NDP beta phosphate via a ping-pong mechanism, using a phosphorylated active-site intermediate. In Dechloromonas aromatica (strain RCB), this protein is Nucleoside diphosphate kinase.